Here is a 327-residue protein sequence, read N- to C-terminus: Malate dehydrogenase 1 (327 aa).

NAD(+) is bound at residue 12–18 (GAAGQIA). Residues R93 and R99 each coordinate substrate. Residues N106, Q113, and 130 to 132 (VGN) contribute to the NAD(+) site. Substrate is bound by residues N132 and R163. H188 acts as the Proton acceptor in catalysis.

It belongs to the LDH/MDH superfamily. MDH type 2 family.

The catalysed reaction is (S)-malate + NAD(+) = oxaloacetate + NADH + H(+). In terms of biological role, catalyzes the reversible oxidation of malate to oxaloacetate. The protein is Malate dehydrogenase 1 of Burkholderia thailandensis (strain ATCC 700388 / DSM 13276 / CCUG 48851 / CIP 106301 / E264).